The sequence spans 129 residues: uncharacterized protein (129 aa).

One can recognise an HIT domain in the interval 3–109 (IFCKIINGEI…IPRYEGDGEV (107 aa)). The Histidine triad motif signature appears at 94 to 98 (HVHFH).

This is an uncharacterized protein from Methanocaldococcus jannaschii (strain ATCC 43067 / DSM 2661 / JAL-1 / JCM 10045 / NBRC 100440) (Methanococcus jannaschii).